Consider the following 189-residue polypeptide: Large ribosomal subunit protein uL5 (189 aa).

This sequence belongs to the universal ribosomal protein uL5 family. As to quaternary structure, part of the 50S ribosomal subunit; part of the 5S rRNA/L5/L18/L25 subcomplex. Contacts the 5S rRNA and the P site tRNA. Forms a bridge to the 30S subunit in the 70S ribosome.

This is one of the proteins that bind and probably mediate the attachment of the 5S RNA into the large ribosomal subunit, where it forms part of the central protuberance. In the 70S ribosome it contacts protein S13 of the 30S subunit (bridge B1b), connecting the 2 subunits; this bridge is implicated in subunit movement. Contacts the P site tRNA; the 5S rRNA and some of its associated proteins might help stabilize positioning of ribosome-bound tRNAs. The sequence is that of Large ribosomal subunit protein uL5 from Parafrankia sp. (strain EAN1pec).